The sequence spans 419 residues: Inward rectifier potassium channel 16 (419 aa).

Topologically, residues 1 to 67 (MSYYGSSYRI…MVDIFTTLVD (67 aa)) are cytoplasmic. A helical membrane pass occupies residues 68–94 (TKWRHMFVIFSLSYILSWLIFGSIFWL). Over 95–117 (IAFHHGDLLSDPDITPCVDNVHS) the chain is Extracellular. Positions 118–134 (FTAAFLFSLETQTTIGY) form an intramembrane region, helical; Pore-forming. The short motif at 131–136 (TIGYGY) is the Selectivity filter element. At 135–143 (GYRCVTEEC) the chain is on the extracellular side. A helical membrane pass occupies residues 144 to 171 (SVAVLTVILQSILSCIINTFIIGAALAK). Residues 172–419 (MATARKRAQT…LNRISMESQM (248 aa)) are Cytoplasmic-facing. Residues Ser-358, Ser-374, and Ser-376 each carry the phosphoserine modification.

Belongs to the inward rectifier-type potassium channel (TC 1.A.2.1) family. KCNJ16 subfamily. As to quaternary structure, it forms heteromeric channels with Kir4.1/KCNJ10; this interaction is required for KCNJ16 localization to the basolateral membrane in kidney cells. As a heteromer with KCNJ10, may interact with MAGI1; this interaction may facilitate KCNJ10/KCNJ16 potassium channel expression at the basolateral membrane in kidney cells. May form heteromers with Kir2.1/KCNJ2. Can form heteromeric channels with Kir4.2/KCNJ15. As to expression, abundantly expressed in the proximal and distal segments of the nephron.

It localises to the membrane. The protein localises to the basolateral cell membrane. The catalysed reaction is K(+)(in) = K(+)(out). With respect to regulation, channel activity is strongly regulated by variations of cytosolic pH; channels are activated by alkaline and inhibited by acidic pH values. Activated by phosphatidylinositol 4,5 biphosphate (PtdIns(4,5)P2). Functionally, inward rectifier potassium channels are characterized by a greater tendency to allow potassium to flow into the cell rather than out of it. Their voltage dependence is regulated by the concentration of extracellular potassium; as external potassium is raised, the voltage range of the channel opening shifts to more positive voltages. The inward rectification is mainly due to the blockage of outward current by internal magnesium. KCNJ16 may be involved in the regulation of fluid and pH balance. In the kidney, together with KCNJ10, mediates basolateral K(+) recycling in distal tubules; this process is critical for Na(+) reabsorption at the tubules. The chain is Inward rectifier potassium channel 16 (Kcnj16) from Mus musculus (Mouse).